Reading from the N-terminus, the 229-residue chain is PKHD-type hydroxylase BRADO6316 (229 aa).

The Fe2OG dioxygenase domain maps to 78–180 (QIFPPLFNRY…RVASFFWLQS (103 aa)). His-98, Asp-100, and His-161 together coordinate Fe cation. Arg-171 serves as a coordination point for 2-oxoglutarate.

Fe(2+) serves as cofactor. L-ascorbate is required as a cofactor.

The chain is PKHD-type hydroxylase BRADO6316 from Bradyrhizobium sp. (strain ORS 278).